Here is a 301-residue protein sequence, read N- to C-terminus: Protein p34 (301 aa).

A run of 5 helical transmembrane segments spans residues 15 to 35 (YLSV…WVVT), 40 to 60 (ILAA…NLIA), 83 to 103 (TIFS…FSSV), 120 to 140 (TVMY…TYVI), and 171 to 191 (LSDY…LYIF).

Belongs to the cation diffusion facilitator (CDF) transporter (TC 2.A.4) family.

Its subcellular location is the cell membrane. This is Protein p34 (p34) from Rickettsia rickettsii (strain Sheila Smith).